The primary structure comprises 387 residues: Colicin-N (387 aa).

Residues 1 to 11 are compositionally biased toward polar residues; that stretch reads MGSNGADNAHN. Residues 1–106 are disordered; it reads MGSNGADNAH…ITITPDNSKP (106 aa). A compositionally biased stretch (gly residues) spans 14-30; that stretch reads FGGGKNPGIGNTSGAGS. A compositionally biased stretch (low complexity) spans 31 to 48; that stretch reads NGSASSNRGNSNGWSWSN. Positions 78-87 are enriched in gly residues; that stretch reads GNSGNRGNNG. The next 2 helical transmembrane spans lie at 325-345 and 350-370; these read IIGG…LSFL and LAVT…SSFI.

This sequence belongs to the channel forming colicin family.

It is found in the cell membrane. Functionally, this colicin is a channel-forming colicin. This class of transmembrane toxins depolarize the cytoplasmic membrane, leading to dissipation of cellular energy. In terms of biological role, colicins are polypeptide toxins produced by and active against E.coli and closely related bacteria. This Escherichia coli protein is Colicin-N (cna).